Consider the following 312-residue polypeptide: D-alanine--D-alanine ligase (312 aa).

An ATP-grasp domain is found at 108–308 (KLVWQQTGIP…YSELVVKVLS (201 aa)). Residue 138–193 (VAKLGMPLFVKPASEGSSVAVEKVKSADALPAALEEAAKHDKIVIVEKSIEGGGEY) participates in ATP binding. Positions 262, 275, and 277 each coordinate Mg(2+).

This sequence belongs to the D-alanine--D-alanine ligase family. Mg(2+) serves as cofactor. It depends on Mn(2+) as a cofactor.

The protein localises to the cytoplasm. It carries out the reaction 2 D-alanine + ATP = D-alanyl-D-alanine + ADP + phosphate + H(+). It functions in the pathway cell wall biogenesis; peptidoglycan biosynthesis. In terms of biological role, cell wall formation. In Burkholderia thailandensis (strain ATCC 700388 / DSM 13276 / CCUG 48851 / CIP 106301 / E264), this protein is D-alanine--D-alanine ligase.